A 157-amino-acid chain; its full sequence is Large ribosomal subunit protein eL24 (157 aa).

The disordered stretch occupies residues 94-157; the sequence is RNQKPEVRKA…ISAPRVGGKR (64 aa). Residues 96 to 117 show a composition bias toward basic and acidic residues; it reads QKPEVRKAQREQAIRAAKEAKK. Low complexity predominate over residues 123–140; that stretch reads KKPAAPSAKASTKTAQKP.

The protein belongs to the eukaryotic ribosomal protein eL24 family. As to quaternary structure, component of the large ribosomal subunit.

Its subcellular location is the cytoplasm. Component of the large ribosomal subunit. The ribosome is a large ribonucleoprotein complex responsible for the synthesis of proteins in the cell. This chain is Large ribosomal subunit protein eL24 (rpl24), found in Pagrus major (Red sea bream).